Reading from the N-terminus, the 371-residue chain is Queuine tRNA-ribosyltransferase (371 aa).

The Nucleophile role is filled by aspartate 90. Residue aspartate 90 is the Proton acceptor of the active site. Residues 90 to 94 (DSGGF), serine 91, aspartate 144, glutamine 189, and glycine 215 contribute to the substrate site. The tract at residues 246 to 252 (GVGTPEN) is RNA binding. Aspartate 265 acts as the Nucleophile in catalysis. Residues 270–274 (TRNAR) form an RNA binding; important for wobble base 34 recognition region. Cysteine 303, cysteine 305, cysteine 308, and histidine 334 together coordinate Zn(2+).

It belongs to the queuine tRNA-ribosyltransferase family. In terms of assembly, homodimer. Within each dimer, one monomer is responsible for RNA recognition and catalysis, while the other monomer binds to the replacement base PreQ1. Zn(2+) serves as cofactor.

The catalysed reaction is 7-aminomethyl-7-carbaguanine + guanosine(34) in tRNA = 7-aminomethyl-7-carbaguanosine(34) in tRNA + guanine. It functions in the pathway tRNA modification; tRNA-queuosine biosynthesis. Its function is as follows. Catalyzes the base-exchange of a guanine (G) residue with the queuine precursor 7-aminomethyl-7-deazaguanine (PreQ1) at position 34 (anticodon wobble position) in tRNAs with GU(N) anticodons (tRNA-Asp, -Asn, -His and -Tyr). Catalysis occurs through a double-displacement mechanism. The nucleophile active site attacks the C1' of nucleotide 34 to detach the guanine base from the RNA, forming a covalent enzyme-RNA intermediate. The proton acceptor active site deprotonates the incoming PreQ1, allowing a nucleophilic attack on the C1' of the ribose to form the product. After dissociation, two additional enzymatic reactions on the tRNA convert PreQ1 to queuine (Q), resulting in the hypermodified nucleoside queuosine (7-(((4,5-cis-dihydroxy-2-cyclopenten-1-yl)amino)methyl)-7-deazaguanosine). The polypeptide is Queuine tRNA-ribosyltransferase (Helicobacter pylori (strain ATCC 700392 / 26695) (Campylobacter pylori)).